We begin with the raw amino-acid sequence, 957 residues long: Dystrophin-related protein 2 (957 aa).

Spectrin repeat units lie at residues 102-179 (DHSG…EELE) and 231-337 (EQLL…QLQD). The WW domain occupies 358–383 (WERAISPNKVPYYINHQAQTTCWDHP). A ZZ-type; degenerate zinc finger spans residues 605–661 (KHQTKCSICRQCPIKGFRYRSLKQFNVDICQTCFLTGRASKGNKLHYPIMEYYTPTT). Zn(2+) is bound by residues cysteine 610, cysteine 613, cysteine 634, and cysteine 637. A Phosphoserine modification is found at serine 748. A compositionally biased stretch (low complexity) spans 877-900 (PPTESDGSGSAGSSLASSPQQSEG). The segment at 877–923 (PPTESDGSGSAGSSLASSPQQSEGSHPREKGQTTPDTEAADDVGSKS) is disordered. A Phosphothreonine modification is found at threonine 910.

Interacts with PRX; this enhances phosphorylation. Identified in a dystroglycan complex that contains at least PRX, DRP2, UTRN, DMD and DAG1. As to expression, detected in fetal brain.

It is found in the postsynaptic density. It localises to the cell projection. The protein localises to the dendrite. The protein resides in the perikaryon. Its subcellular location is the cell membrane. Functionally, required for normal myelination and for normal organization of the cytoplasm and the formation of Cajal bands in myelinating Schwann cells. Required for normal PRX location at appositions between the abaxonal surface of the myelin sheath and the Schwann cell plasma membrane. Possibly involved in membrane-cytoskeleton interactions of the central nervous system. This chain is Dystrophin-related protein 2 (DRP2), found in Homo sapiens (Human).